Reading from the N-terminus, the 262-residue chain is Hydroxyethylthiazole kinase (262 aa).

Substrate is bound at residue methionine 50. ATP is bound by residues arginine 125 and threonine 171. Glycine 198 serves as a coordination point for substrate.

Belongs to the Thz kinase family. Mg(2+) is required as a cofactor.

The catalysed reaction is 5-(2-hydroxyethyl)-4-methylthiazole + ATP = 4-methyl-5-(2-phosphooxyethyl)-thiazole + ADP + H(+). It functions in the pathway cofactor biosynthesis; thiamine diphosphate biosynthesis; 4-methyl-5-(2-phosphoethyl)-thiazole from 5-(2-hydroxyethyl)-4-methylthiazole: step 1/1. In terms of biological role, catalyzes the phosphorylation of the hydroxyl group of 4-methyl-5-beta-hydroxyethylthiazole (THZ). The chain is Hydroxyethylthiazole kinase from Escherichia coli O139:H28 (strain E24377A / ETEC).